The primary structure comprises 362 residues: MGSSFGHLFRISTFGESHGGGVGVVIDGCPPRLEISEAEIQFELDRRRPGQSKITTPRKEADQCEILSGVVDGKTLGTPIAIVVRNKDQRSQDYSEMQVAYRPSHADATYDAKYGIRAVAGGGRSSARETIGRVAAGAIAKKLLREIAGVEIVGYVKRIKDLEGQIDPETVTLEQVESTIVRCPDEAIAPQMIDLIEAIGREGDSLGGVVECVARRVPRGLGEPVFDKLEADLAKACMSLPATKGFEIGSGFAGTEMTGSEHNDAFYTDEQGQIRTRTNRSGGTQGGISNGENIVIRVAFKPTATIRKEQETVTNSGEATTLAARGRHDPCVLPRAVPMVEAMVALVLCDHLLRQQAQCSWW.

Arginine 47 lines the NADP(+) pocket. FMN is bound by residues 124–126, glycine 286, 301–305, and arginine 327; these read RSS and KPTAT.

This sequence belongs to the chorismate synthase family. As to quaternary structure, homotetramer. FMNH2 serves as cofactor.

It catalyses the reaction 5-O-(1-carboxyvinyl)-3-phosphoshikimate = chorismate + phosphate. The protein operates within metabolic intermediate biosynthesis; chorismate biosynthesis; chorismate from D-erythrose 4-phosphate and phosphoenolpyruvate: step 7/7. In terms of biological role, catalyzes the anti-1,4-elimination of the C-3 phosphate and the C-6 proR hydrogen from 5-enolpyruvylshikimate-3-phosphate (EPSP) to yield chorismate, which is the branch point compound that serves as the starting substrate for the three terminal pathways of aromatic amino acid biosynthesis. This reaction introduces a second double bond into the aromatic ring system. This is Chorismate synthase from Synechococcus elongatus (strain ATCC 33912 / PCC 7942 / FACHB-805) (Anacystis nidulans R2).